Reading from the N-terminus, the 158-residue chain is MLNQLDNLTERVRGSNKLVDRWLHVRKHLLVAYYNLVGIKPGKESYMRLNEKALDDFCQSLVDYLSAGHFSIYERILHKLEGNGQLARAAKIWPQLEANTQQIMDDYDSSLETAIDHDNYLEFQQVLSDIGEALEARFVLEDKLILLVLDAARVKHPA.

It belongs to the Rsd/AlgQ family. In terms of assembly, interacts with RpoD.

It localises to the cytoplasm. Its function is as follows. Binds RpoD and negatively regulates RpoD-mediated transcription activation by preventing the interaction between the primary sigma factor RpoD with the catalytic core of the RNA polymerase and with promoter DNA. May be involved in replacement of the RNA polymerase sigma subunit from RpoD to RpoS during the transition from exponential growth to the stationary phase. The polypeptide is Regulator of sigma D (Escherichia coli O6:H1 (strain CFT073 / ATCC 700928 / UPEC)).